A 744-amino-acid polypeptide reads, in one-letter code: Potassium-transporting ATPase ATP-binding subunit (744 aa).

The next 4 helical transmembrane spans lie at 80–100, 108–128, 265–285, and 310–330; these read PVMF…VMAL, AGFI…ANVA, LALT…TVTL, and VLVA…LSAI. Asp-363 serves as the catalytic 4-aspartylphosphate intermediate. ATP is bound by residues Asp-400, Glu-404, 435–442, and Lys-457; that span reads FSAQTRMS. Asp-580 and Asp-584 together coordinate Mg(2+). 3 helical membrane-spanning segments follow: residues 650–670, 678–698, and 724–744; these read FAII…LNVM, AVMS…PLAL, and LLLP…MGWV.

This sequence belongs to the cation transport ATPase (P-type) (TC 3.A.3) family. Type IA subfamily. As to quaternary structure, the system is composed of three essential subunits: KdpA, KdpB and KdpC.

Its subcellular location is the cell inner membrane. It carries out the reaction K(+)(out) + ATP + H2O = K(+)(in) + ADP + phosphate + H(+). In terms of biological role, part of the high-affinity ATP-driven potassium transport (or Kdp) system, which catalyzes the hydrolysis of ATP coupled with the electrogenic transport of potassium into the cytoplasm. This subunit is responsible for energy coupling to the transport system and for the release of the potassium ions to the cytoplasm. In Ralstonia nicotianae (strain ATCC BAA-1114 / GMI1000) (Ralstonia solanacearum), this protein is Potassium-transporting ATPase ATP-binding subunit.